Reading from the N-terminus, the 218-residue chain is Glutathione S-transferase Mu 4 (218 aa).

Residues 1-88 enclose the GST N-terminal domain; that stretch reads MPMTLGYWDI…YIARKHNLCG (88 aa). Glutathione-binding positions include 7–8, 46–50, 59–60, and 72–73; these read YW, WLSEK, NL, and QS. In terms of domain architecture, GST C-terminal spans 90 to 208; it reads TEEEKIRVDI…KTSRFLRTPL (119 aa). A substrate-binding site is contributed by Y116.

Belongs to the GST superfamily. Mu family. Homodimer.

The protein localises to the cytoplasm. It catalyses the reaction RX + glutathione = an S-substituted glutathione + a halide anion + H(+). The catalysed reaction is 1-chloro-2,4-dinitrobenzene + glutathione = 2,4-dinitrophenyl-S-glutathione + chloride + H(+). It carries out the reaction (13S,14S)-epoxy-(4Z,7Z,9E,11E,16Z,19Z)-docosahexaenoate + glutathione = (13R)-S-glutathionyl-(14S)-hydroxy-(4Z,7Z,9E,11E,16Z,19Z)-docosahexaenoate. The enzyme catalyses leukotriene C4 = leukotriene A4 + glutathione. Its function is as follows. Conjugation of reduced glutathione to a wide number of exogenous and endogenous hydrophobic electrophiles. Catalyzes the conjugation of leukotriene A4 with reduced glutathione (GSH) to form leukotriene C4. Can also catalyze the transfer of a glutathionyl group from glutathione (GSH) to 13(S),14(S)-epoxy-docosahexaenoic acid to form maresin conjugate in tissue regeneration 1 (MCTR1), a bioactive lipid mediator that possess potent anti-inflammatory and proresolving actions. The polypeptide is Glutathione S-transferase Mu 4 (Gstm4) (Rattus norvegicus (Rat)).